A 427-amino-acid chain; its full sequence is MLTKAETANDIAAVMAEVGRKARAAAAPLSIATTEQKNRALIAAADAMLEARGDILEANKLDLANAEKNGMAASFVDRLALDDGRISAIADGIRAIAALPDPVGEVIAEWDRPNGLHIERVRTPLGVIGVIYESRPNVTADAGALCLKAGNAVILRGGSDSAHSSAAIHKALVRGLEAAGLPADAIQIVPVTDRAAVGEMLKGLDGAIDVIVPRGGKSLVARVQSEARVPVFAHLEGICHLYIDKSADLDMARKIAVDAKMRRTGICGAAETLLVDRAAAAMHLVPILEDLAAKSCEIRGSADVLALYPAAKPATEEDWSTEYLDAIISVALVDGISGAIEHINRYSSHHTEAVVAEDAAAVARFFNEIDSAILLHNASTQFADGGEFGMGAEIGIATGKMHARGPVGVEQLTSFKYRVRGDGQIRG.

It belongs to the gamma-glutamyl phosphate reductase family.

The protein localises to the cytoplasm. It catalyses the reaction L-glutamate 5-semialdehyde + phosphate + NADP(+) = L-glutamyl 5-phosphate + NADPH + H(+). It functions in the pathway amino-acid biosynthesis; L-proline biosynthesis; L-glutamate 5-semialdehyde from L-glutamate: step 2/2. Catalyzes the NADPH-dependent reduction of L-glutamate 5-phosphate into L-glutamate 5-semialdehyde and phosphate. The product spontaneously undergoes cyclization to form 1-pyrroline-5-carboxylate. This is Gamma-glutamyl phosphate reductase from Brucella anthropi (strain ATCC 49188 / DSM 6882 / CCUG 24695 / JCM 21032 / LMG 3331 / NBRC 15819 / NCTC 12168 / Alc 37) (Ochrobactrum anthropi).